We begin with the raw amino-acid sequence, 306 residues long: Embryogenic cell protein 40 (306 aa).

Disordered regions lie at residues M1–G57, A80–G171, and G188–H306. Residues I12–Q23 are compositionally biased toward polar residues. A compositionally biased stretch (low complexity) spans V32–T44. Gly residues-rich tracts occupy residues G85 to T119, G127 to V151, and G159 to G171. Over residues G194–S204 the composition is skewed to low complexity. Basic and acidic residues-rich tracts occupy residues H205–H218 and K243–T259. Low complexity predominate over residues T260–A278. Residues V279 to P298 are compositionally biased toward basic and acidic residues.

The protein belongs to the plant dehydrin family.

This is Embryogenic cell protein 40 (ECP40) from Daucus carota (Wild carrot).